The chain runs to 154 residues: uncharacterized protein (154 aa).

A Phosphoserine modification is found at Ser-47.

To yeast YPL229w.

This is an uncharacterized protein from Saccharomyces cerevisiae (strain ATCC 204508 / S288c) (Baker's yeast).